We begin with the raw amino-acid sequence, 99 residues long: Plastocyanin A'/A'' (99 aa).

One can recognise a Plastocyanin-like domain in the interval 1–99 (IEVLLGSDDG…AGMVGKVTVN (99 aa)). Positions 37, 84, 87, and 92 each coordinate Cu cation.

The protein belongs to the plastocyanin family. Requires Cu(2+) as cofactor.

The protein resides in the plastid. It is found in the chloroplast thylakoid membrane. Participates in electron transfer between P700 and the cytochrome b6-f complex in photosystem I. The polypeptide is Plastocyanin A'/A'' (Nicotiana tabacum (Common tobacco)).